A 326-amino-acid chain; its full sequence is Cytosolic sulfotransferase 7 (326 aa).

72 to 77 (KSGTTW) serves as a coordination point for 3'-phosphoadenylyl sulfate. Residue His-138 is the Proton acceptor of the active site. 3'-phosphoadenylyl sulfate is bound by residues Arg-160, Ser-168, Tyr-226, and 292 to 294 (RKG).

The protein belongs to the sulfotransferase 1 family.

The protein resides in the cytoplasm. Functionally, sulfotransferase that utilizes 3'-phospho-5'-adenylyl sulfate (PAPS) as sulfonate donor. This chain is Cytosolic sulfotransferase 7 (SOT7), found in Arabidopsis thaliana (Mouse-ear cress).